Consider the following 250-residue polypeptide: PHD finger protein ALFIN-LIKE 3 (250 aa).

An N-acetylmethionine modification is found at Met1. Residues 146–192 (DKSSAANQNGNKSKSNSKVRTSEGKSSKTKQPKEEDEEIDEDDEDDH) form a disordered region. A compositionally biased stretch (low complexity) spans 149 to 163 (SAANQNGNKSKSNSK). Residues 179–192 (EEDEEIDEDDEDDH) show a composition bias toward acidic residues. The PHD-type zinc finger occupies 194–246 (ETLCGACGDSDGADEFWICCDLCEKWFHGKCVKITPARAEHIKQYKCPSCSNK).

This sequence belongs to the Alfin family. As to expression, ubiquitously expressed.

The protein localises to the nucleus. In terms of biological role, histone-binding component that specifically recognizes H3 tails trimethylated on 'Lys-4' (H3K4me3), which mark transcription start sites of virtually all active genes. This is PHD finger protein ALFIN-LIKE 3 (AL3) from Arabidopsis thaliana (Mouse-ear cress).